A 291-amino-acid chain; its full sequence is Pyridoxal 5'-phosphate synthase subunit PdxS (291 aa).

Asp23 contacts D-ribose 5-phosphate. Lys80 acts as the Schiff-base intermediate with D-ribose 5-phosphate in catalysis. Gly152 is a binding site for D-ribose 5-phosphate. Residue Arg164 participates in D-glyceraldehyde 3-phosphate binding. D-ribose 5-phosphate contacts are provided by residues Gly213 and 234 to 235 (GS).

It belongs to the PdxS/SNZ family. In the presence of PdxT, forms a dodecamer of heterodimers.

The enzyme catalyses aldehydo-D-ribose 5-phosphate + D-glyceraldehyde 3-phosphate + L-glutamine = pyridoxal 5'-phosphate + L-glutamate + phosphate + 3 H2O + H(+). It functions in the pathway cofactor biosynthesis; pyridoxal 5'-phosphate biosynthesis. Its function is as follows. Catalyzes the formation of pyridoxal 5'-phosphate from ribose 5-phosphate (RBP), glyceraldehyde 3-phosphate (G3P) and ammonia. The ammonia is provided by the PdxT subunit. Can also use ribulose 5-phosphate and dihydroxyacetone phosphate as substrates, resulting from enzyme-catalyzed isomerization of RBP and G3P, respectively. The sequence is that of Pyridoxal 5'-phosphate synthase subunit PdxS from Bifidobacterium longum (strain NCC 2705).